We begin with the raw amino-acid sequence, 222 residues long: Endonuclease V (222 aa).

Residues D34 and D102 each contribute to the Mg(2+) site.

It belongs to the endonuclease V family. Mg(2+) serves as cofactor.

It localises to the cytoplasm. The enzyme catalyses Endonucleolytic cleavage at apurinic or apyrimidinic sites to products with a 5'-phosphate.. In terms of biological role, DNA repair enzyme involved in the repair of deaminated bases. Selectively cleaves double-stranded DNA at the second phosphodiester bond 3' to a deoxyinosine leaving behind the intact lesion on the nicked DNA. The chain is Endonuclease V from Photorhabdus laumondii subsp. laumondii (strain DSM 15139 / CIP 105565 / TT01) (Photorhabdus luminescens subsp. laumondii).